The primary structure comprises 612 residues: MPKLRSATSTQGRNMAGARALWRATGMKENDFGKPIIAVVNSFTQFVPGHVHLKDMGQLVAAEIEKAGGVAKEFNTIAVDDGIAMGHGGMLYSLPSRDLIADSVEYMVNAHCADAMVCISNCDKITPGMLMAAMRLNIPTIFVSGGPMEAGKTKLSDQLIRLDLVDAMIEAADPNVSDERIDAIERSACPTCGSCSGMFTANSMNCLTEALGLSLPGNGSMLATHADRKELFLKAGRQIVELCKRYYEQDDASVLPRSIGTFDAFENAMSLDIAMGGSSNTVLHLLAAAQEAGVDFKMEDIDRLSRKVPCLSKIAPNTNKYHMEDVHRAGGIMGLLGELDRAGLIHKNTHTVLGMSMGEQLDQYDIIRNQDEELHKFFRAGPAGIRTTQAFSQDCRWDTVDNDRVNGCIRNKENAISQEGGLAVLFGNLAEDGCIVKTAGVDESIWKFTGTAIVFESQEDAVAGILGGKVKEGHVVVIRYEGPKGGPGMQEMLYPTSYLKSMGLGKKCALLTDGRFSGGTSGLSIGHASPEAASGGAIGLVRDGDIINIDIPNRAINLEISNDELAARRAEQDQKGWQPANREREVSFALKVFGHFATSADKGAVRDKTLLK.

Aspartate 81 serves as a coordination point for Mg(2+). Position 122 (cysteine 122) interacts with [2Fe-2S] cluster. Mg(2+) is bound by residues aspartate 123 and lysine 124. An N6-carboxylysine modification is found at lysine 124. Cysteine 195 serves as a coordination point for [2Fe-2S] cluster. Glutamate 491 is a Mg(2+) binding site. Serine 517 acts as the Proton acceptor in catalysis.

Belongs to the IlvD/Edd family. As to quaternary structure, homodimer. It depends on [2Fe-2S] cluster as a cofactor. The cofactor is Mg(2+).

It catalyses the reaction (2R)-2,3-dihydroxy-3-methylbutanoate = 3-methyl-2-oxobutanoate + H2O. It carries out the reaction (2R,3R)-2,3-dihydroxy-3-methylpentanoate = (S)-3-methyl-2-oxopentanoate + H2O. It functions in the pathway amino-acid biosynthesis; L-isoleucine biosynthesis; L-isoleucine from 2-oxobutanoate: step 3/4. Its pathway is amino-acid biosynthesis; L-valine biosynthesis; L-valine from pyruvate: step 3/4. In terms of biological role, functions in the biosynthesis of branched-chain amino acids. Catalyzes the dehydration of (2R,3R)-2,3-dihydroxy-3-methylpentanoate (2,3-dihydroxy-3-methylvalerate) into 2-oxo-3-methylpentanoate (2-oxo-3-methylvalerate) and of (2R)-2,3-dihydroxy-3-methylbutanoate (2,3-dihydroxyisovalerate) into 2-oxo-3-methylbutanoate (2-oxoisovalerate), the penultimate precursor to L-isoleucine and L-valine, respectively. In Haemophilus influenzae (strain 86-028NP), this protein is Dihydroxy-acid dehydratase.